The primary structure comprises 160 residues: uncharacterized protein (160 aa).

This is an uncharacterized protein from Escherichia coli O157:H7.